Consider the following 397-residue polypeptide: DNA-directed RNA polymerase subunit Rpo1C (397 aa).

This sequence belongs to the RNA polymerase beta' chain family. Part of the RNA polymerase complex.

The protein localises to the cytoplasm. It catalyses the reaction RNA(n) + a ribonucleoside 5'-triphosphate = RNA(n+1) + diphosphate. DNA-dependent RNA polymerase (RNAP) catalyzes the transcription of DNA into RNA using the four ribonucleoside triphosphates as substrates. Forms part of the jaw domain. This is DNA-directed RNA polymerase subunit Rpo1C from Pyrococcus abyssi (strain GE5 / Orsay).